The sequence spans 92 residues: DNA-directed RNA polymerase subunit omega (92 aa).

The protein belongs to the RNA polymerase subunit omega family. In terms of assembly, the RNAP catalytic core consists of 2 alpha, 1 beta, 1 beta' and 1 omega subunit. When a sigma factor is associated with the core the holoenzyme is formed, which can initiate transcription.

It catalyses the reaction RNA(n) + a ribonucleoside 5'-triphosphate = RNA(n+1) + diphosphate. Functionally, promotes RNA polymerase assembly. Latches the N- and C-terminal regions of the beta' subunit thereby facilitating its interaction with the beta and alpha subunits. In Shewanella amazonensis (strain ATCC BAA-1098 / SB2B), this protein is DNA-directed RNA polymerase subunit omega.